The sequence spans 328 residues: Probable voltage-gated potassium channel subunit beta (328 aa).

Residues Trp21, Gln27, and Asp49 each coordinate NADP(+). Tyr54 functions as the Proton donor/acceptor in the catalytic mechanism. NADP(+) contacts are provided by Ser152, Gln178, Trp207, Ser208, Pro209, Leu210, Ala211, Lys218, Arg229, Gly285, Thr287, Gln291, Glu294, and Asn295.

Belongs to the shaker potassium channel beta subunit family. As to quaternary structure, forms heteromultimeric complexes with potassium channel alpha subunits. Expressed in roots, leaves and flowers (at protein level).

Its function is as follows. Probable accessory potassium channel protein which modulates the activity of the pore-forming alpha subunit. The sequence is that of Probable voltage-gated potassium channel subunit beta (KAB1) from Arabidopsis thaliana (Mouse-ear cress).